The sequence spans 389 residues: Choline/ethanolaminephosphotransferase 2 (389 aa).

A run of 8 helical transmembrane segments spans residues 49-69 (MITLMGFMFLLTSALLGYIYS), 141-161 (TFWFWVISAVPFFGATWEHYF), 176-196 (GLALIYCGHFFTAIVGAEWWA), 220-240 (IILFSMIFFAVIPTLAINTSN), 252-272 (MLLALAMLYPLVTLIAGVLIW), 286-306 (HLVVLGTGLAFGFLVGRMILA), 321-338 (MSLLYLPFALANALTARL), and 350-370 (VLLGYCIFTLSLYAHFATSVI).

Belongs to the CDP-alcohol phosphatidyltransferase class-I family. Requires Mg(2+) as cofactor. Mn(2+) is required as a cofactor.

The protein resides in the membrane. The catalysed reaction is CDP-ethanolamine + a 1,2-diacyl-sn-glycerol = a 1,2-diacyl-sn-glycero-3-phosphoethanolamine + CMP + H(+). It carries out the reaction CDP-choline + a 1,2-diacyl-sn-glycerol = a 1,2-diacyl-sn-glycero-3-phosphocholine + CMP + H(+). It participates in phospholipid metabolism; phosphatidylethanolamine biosynthesis; phosphatidylethanolamine from ethanolamine: step 3/3. Its pathway is phospholipid metabolism; phosphatidylcholine biosynthesis; phosphatidylcholine from phosphocholine: step 2/2. Catalyzes both phosphatidylcholine and phosphatidylethanolamine biosynthesis from CDP-choline and CDP-ethanolamine, respectively. Has a higher cholinephosphotransferase activity than ethanolaminephosphotransferase activity. The polypeptide is Choline/ethanolaminephosphotransferase 2 (AAPT2) (Arabidopsis thaliana (Mouse-ear cress)).